The chain runs to 229 residues: Uracil-DNA glycosylase (229 aa).

Aspartate 64 serves as the catalytic Proton acceptor.

It belongs to the uracil-DNA glycosylase (UDG) superfamily. UNG family.

It localises to the cytoplasm. It carries out the reaction Hydrolyzes single-stranded DNA or mismatched double-stranded DNA and polynucleotides, releasing free uracil.. Functionally, excises uracil residues from the DNA which can arise as a result of misincorporation of dUMP residues by DNA polymerase or due to deamination of cytosine. This chain is Uracil-DNA glycosylase, found in Geobacillus kaustophilus (strain HTA426).